The following is a 418-amino-acid chain: Light-independent protochlorophyllide reductase subunit N (418 aa).

Residues C17, C42, and C103 each coordinate [4Fe-4S] cluster.

This sequence belongs to the BchN/ChlN family. As to quaternary structure, protochlorophyllide reductase is composed of three subunits; ChlL, ChlN and ChlB. Forms a heterotetramer of two ChlB and two ChlN subunits. The cofactor is [4Fe-4S] cluster.

The enzyme catalyses chlorophyllide a + oxidized 2[4Fe-4S]-[ferredoxin] + 2 ADP + 2 phosphate = protochlorophyllide a + reduced 2[4Fe-4S]-[ferredoxin] + 2 ATP + 2 H2O. It functions in the pathway porphyrin-containing compound metabolism; chlorophyll biosynthesis (light-independent). Component of the dark-operative protochlorophyllide reductase (DPOR) that uses Mg-ATP and reduced ferredoxin to reduce ring D of protochlorophyllide (Pchlide) to form chlorophyllide a (Chlide). This reaction is light-independent. The NB-protein (ChlN-ChlB) is the catalytic component of the complex. This is Light-independent protochlorophyllide reductase subunit N from Prochlorococcus marinus (strain MIT 9303).